Here is a 276-residue protein sequence, read N- to C-terminus: Adenylate kinase (276 aa).

38–43 (GSGKGT) serves as a coordination point for ATP. Residues 58–87 (STGDMLRAAIEQGTETGKQAKTIMDQGGLV) are NMP. Residues threonine 59, arginine 64, 85-87 (GLV), 113-116 (GFPR), and glutamine 120 contribute to the AMP site. Residues 154–191 (GRLVHPSSGRSYHREFFPPKVDMIDDITGEPLIQRSDD) form an LID region. Residues arginine 155 and 164–165 (SY) each bind ATP. Arginine 188 and arginine 199 together coordinate AMP. Lysine 227 lines the ATP pocket.

It belongs to the adenylate kinase family. AK2 subfamily. As to quaternary structure, monomer.

It is found in the cytoplasm. Its subcellular location is the cytosol. The protein resides in the mitochondrion intermembrane space. The enzyme catalyses AMP + ATP = 2 ADP. Functionally, catalyzes the reversible transfer of the terminal phosphate group between ATP and AMP. Plays an important role in cellular energy homeostasis and in adenine nucleotide metabolism. Adenylate kinase activity is critical for regulation of the phosphate utilization and the AMP de novo biosynthesis pathways. The sequence is that of Adenylate kinase (adkA) from Dictyostelium discoideum (Social amoeba).